We begin with the raw amino-acid sequence, 372 residues long: L-selectin (372 aa).

A signal peptide spans 1–28; that stretch reads MIFPWKCQSTQRDLWNIFKLWGWTMLCC. Residues 29–38 constitute a propeptide that is removed on maturation; that stretch reads DFLAHHGTDC. Residues 39 to 332 lie on the Extracellular side of the membrane; the sequence is WTYHYSEKPM…FSMIKEGDYN (294 aa). One can recognise a C-type lectin domain in the interval 55-155; the sequence is RFCRDNYTDL…ACHKLKAALC (101 aa). Cystine bridges form between Cys57–Cys155, Cys128–Cys147, Cys160–Cys171, Cys165–Cys180, Cys182–Cys191, Cys197–Cys241, Cys227–Cys254, Cys259–Cys303, and Cys289–Cys316. 2 N-linked (GlcNAc...) asparagine glycosylation sites follow: Asn60 and Asn104. 5 residues coordinate Ca(2+): Glu118, Asn120, Glu126, Asn143, and Asp144. The EGF-like domain maps to 156-192; it reads YTASCQPWSCSGHGECVEIINNYTCNCDVGYYGPQCQ. The N-linked (GlcNAc...) asparagine glycan is linked to Asn177. Sushi domains follow at residues 195–256 and 257–318; these read IQCE…TCQV and IQCE…ICQK. 3 N-linked (GlcNAc...) asparagine glycosylation sites follow: Asn232, Asn246, and Asn271. Residues 333–355 form a helical membrane-spanning segment; the sequence is PLFIPVAVMVTAFSGLAFIIWLA. Topologically, residues 356-372 are cytoplasmic; that stretch reads RRLKKGKKSKRSMNDPY.

The protein belongs to the selectin/LECAM family. In terms of assembly, interaction with SELPLG/PSGL1 and PODXL2 is required for promoting recruitment and rolling of leukocytes. This interaction is dependent on the sialyl Lewis X glycan modification of SELPLG and PODXL2, and tyrosine sulfation modifications of SELPLG. Sulfation on 'Tyr-51' of SELPLG is important for L-selectin binding. In terms of processing, N-glycosylated. In terms of tissue distribution, expressed in B-cell lines and T-lymphocytes.

The protein resides in the cell membrane. Functionally, calcium-dependent lectin that mediates cell adhesion by binding to glycoproteins on neighboring cells. Mediates the adherence of lymphocytes to endothelial cells of high endothelial venules in peripheral lymph nodes. Promotes initial tethering and rolling of leukocytes in endothelia. The protein is L-selectin (SELL) of Homo sapiens (Human).